The chain runs to 460 residues: A-type ATP synthase subunit B (460 aa).

It belongs to the ATPase alpha/beta chains family. Has multiple subunits with at least A(3), B(3), C, D, E, F, H, I and proteolipid K(x).

It localises to the cell membrane. Functionally, component of the A-type ATP synthase that produces ATP from ADP in the presence of a proton gradient across the membrane. The B chain is a regulatory subunit. The protein is A-type ATP synthase subunit B of Thermoplasma acidophilum (strain ATCC 25905 / DSM 1728 / JCM 9062 / NBRC 15155 / AMRC-C165).